Consider the following 280-residue polypeptide: uncharacterized protein (280 aa).

A signal peptide spans 1-35 (MQGQVLKKVLKKYVHIGMCTLFLHAILLFPCVAQA).

This is an uncharacterized protein from Treponema pallidum (strain Nichols).